The chain runs to 309 residues: Taste receptor type 2 member 31 (309 aa).

Residues 1 to 2 are Extracellular-facing; sequence MT. A helical membrane pass occupies residues 3-23; it reads TFLPIIFSSLVVVIFVIGNFA. Residues 24–55 lie on the Cytoplasmic side of the membrane; that stretch reads NGFIALVNSIEWFKXQKISFADQILTALAVSR. A helical membrane pass occupies residues 56 to 76; sequence VGLLWVLLLNWYSTVLNPAFY. The Extracellular portion of the chain corresponds to 77-100; it reads SVEVRTTAYNVWAVTGHFSNWLAT. The helical transmembrane segment at 101–121 threads the bilayer; sequence SLSIFYLLKIANFSNFIFLHL. The Cytoplasmic portion of the chain corresponds to 122–126; that stretch reads KRRVK. Residues 127-147 traverse the membrane as a helical segment; that stretch reads SVILVMLLGPLLFLACQLFMI. Over 148–181 the chain is Extracellular; sequence NMKEIVRTKEYEGNMTWKIKLRSAVYLSDATVTT. Asn161 carries N-linked (GlcNAc...) asparagine glycosylation. The chain crosses the membrane as a helical span at residues 182 to 202; it reads LGNLVPFTLTLLCFLLLICSL. Over 203–229 the chain is Cytoplasmic; it reads CKHLKKMQLHGKGSQDPSTKVHIKVLQ. The helical transmembrane segment at 230–250 threads the bilayer; it reads TVISFLLLCAIYFLSIMISVW. Over 251–259 the chain is Extracellular; sequence SFGSLKNKP. A helical transmembrane segment spans residues 260-280; it reads VFMFCKAIRFSYPSIHPFILI. Residues 281–309 are Cytoplasmic-facing; sequence WGNKKLKQTFLSVLRQVRYWVKGEKPSSP.

Belongs to the G-protein coupled receptor T2R family.

It is found in the membrane. Receptor that may play a role in the perception of bitterness and is gustducin-linked. May play a role in sensing the chemical composition of the gastrointestinal content. The activity of this receptor may stimulate alpha gustducin, mediate PLC-beta-2 activation and lead to the gating of TRPM5. The chain is Taste receptor type 2 member 31 (TAS2R31) from Pan paniscus (Pygmy chimpanzee).